The primary structure comprises 278 residues: Pantothenate synthetase (278 aa).

Met28 to His35 contributes to the ATP binding site. Residue His35 is the Proton donor of the active site. Position 59 (Gln59) interacts with (R)-pantoate. Gln59 provides a ligand contact to beta-alanine. An ATP-binding site is contributed by Gly145 to Asp148. Gln151 provides a ligand contact to (R)-pantoate. Leu182–Arg185 contacts ATP.

This sequence belongs to the pantothenate synthetase family. As to quaternary structure, homodimer.

The protein resides in the cytoplasm. The enzyme catalyses (R)-pantoate + beta-alanine + ATP = (R)-pantothenate + AMP + diphosphate + H(+). It participates in cofactor biosynthesis; (R)-pantothenate biosynthesis; (R)-pantothenate from (R)-pantoate and beta-alanine: step 1/1. Functionally, catalyzes the condensation of pantoate with beta-alanine in an ATP-dependent reaction via a pantoyl-adenylate intermediate. This Methylobacillus flagellatus (strain ATCC 51484 / DSM 6875 / VKM B-1610 / KT) protein is Pantothenate synthetase.